The following is a 170-amino-acid chain: Cyclic pyranopterin monophosphate synthase (170 aa).

Residues 89 to 91 (LCH) and 125 to 126 (ME) each bind substrate. D140 is a catalytic residue.

It belongs to the MoaC family. As to quaternary structure, homohexamer; trimer of dimers.

The enzyme catalyses (8S)-3',8-cyclo-7,8-dihydroguanosine 5'-triphosphate = cyclic pyranopterin phosphate + diphosphate. It functions in the pathway cofactor biosynthesis; molybdopterin biosynthesis. In terms of biological role, catalyzes the conversion of (8S)-3',8-cyclo-7,8-dihydroguanosine 5'-triphosphate to cyclic pyranopterin monophosphate (cPMP). This is Cyclic pyranopterin monophosphate synthase from Streptomyces coelicolor (strain ATCC BAA-471 / A3(2) / M145).